The sequence spans 491 residues: Glucose-6-phosphate 1-dehydrogenase (491 aa).

NADP(+)-binding positions include R50, D92–V93, and K147. H177, K181, E215, and D234 together coordinate substrate. H239 serves as the catalytic Proton acceptor. Substrate is bound by residues K339 and K344.

It belongs to the glucose-6-phosphate dehydrogenase family.

It carries out the reaction D-glucose 6-phosphate + NADP(+) = 6-phospho-D-glucono-1,5-lactone + NADPH + H(+). The protein operates within carbohydrate degradation; pentose phosphate pathway; D-ribulose 5-phosphate from D-glucose 6-phosphate (oxidative stage): step 1/3. Catalyzes the oxidation of glucose 6-phosphate to 6-phosphogluconolactone. The polypeptide is Glucose-6-phosphate 1-dehydrogenase (Dickeya dadantii (strain 3937) (Erwinia chrysanthemi (strain 3937))).